We begin with the raw amino-acid sequence, 514 residues long: MEEQREILEQLKKTLQMLTVEPSKNNQIANEEKEKKENENSWCILEHNYEDIAQEFIDFIYKNPTTYHVVSFFAELLDKHNFKYLSEKSNWQDSIGEDGGKFYTIRNGTNLSAFILGKNWRAEKGVGVIGSHVDALTVKLKPVSFKDTAEGYGRIAVAPYGGTLNELWLDRDLGIGGRLLYKKKGTNEIKSALVDSTPLPVCRIPSLAPHFGKPAEGPFDKEDQTIPVIGFPTPDEEGNEPPTDDEKKSPLFGKHCIHLLRYVAKLAGVEVSELIQMDLDLFDVQKGTIGGIGKHFLFAPRLDDRLCSFAAMIALICYAKDVNTEESDLFSTVTLYDNEEIGSLTRQGAKGGLLESVVERSSSAFTKKPVDLHTVWANSIILSADVNHLYNPNFPEVYLKNHFPVPNVGITLSLDPNGHMATDVVGTALVEELARRNGDKVQYFQIKNNSRSGGTIGPSLASQTGARTIDLGIAQLSMHSIRAATGSKDVGLGVKFFNGFFKHWRSVYDEFGEL.

A propeptide spans 1–45 (MEEQREILEQLKKTLQMLTVEPSKNNQIANEEKEKKENENSWCIL) (required for vacuolar localization. Mediates aggregation and vesicle formation in Cvt pathway). N-linked (GlcNAc...) asparagine glycosylation is found at N107 and N110. H132 serves as a coordination point for Zn(2+). H210 is a binding site for substrate. Zn(2+)-binding residues include D303, E339, and E340. E339 is a binding site for substrate. S356 is subject to Phosphoserine. D385 contributes to the Zn(2+) binding site. D385 and H388 together coordinate substrate. N448 is a glycosylation site (N-linked (GlcNAc...) asparagine). H479 contacts Zn(2+).

It belongs to the peptidase M18 family. Homododecamer. The precursor form of aminopeptidase 1 (prApe1) assembles into dodecamers and further aggregates into higher multimers (the Ape1 complex) in the cytoplasm. The Ape1 complex is disaggregated in the vacuolar lumen, but mature aminopeptidase 1 (mApe1) retains its dodecameric form. Dodecamer assembly in the cytoplasm is essential for formation of an enzymatically active complex. If cytoplasmic homododecamerization of prApe1 is disturbed in mutants, homododecamers of mApe1 will form in the vacuole, but they are enzymatically inactive. Interacts with ATG19. Zn(2+) serves as cofactor. Post-translationally, synthesized in a precursor form (prApe1) that has an amino-terminal propeptide. The N-terminal extension of the 61 kDa precursor is proteolytically processed in two sequential steps. The first step involves proteinase A (PrA/PEP4) and produces a 55 kDa unstable intermediate (iAPI). The second step involves proteinase B (PrB/PRB1) and converts iAPI into the 50 kDa stable, mature enzyme (mApe1).

It is found in the vacuole. It catalyses the reaction Release of an N-terminal amino acid, preferably a neutral or hydrophobic one, from a polypeptide. Aminoacyl-arylamides are poor substrates.. With respect to regulation, strongly and specifically activated by Cl(-) and Br(-), which act as positive allosteric effectors. Inactivated by metal-chelating agents. In terms of biological role, resident vacuolar enzyme that catalyzes the removal of amino acids from the N-terminus of peptides and proteins. Also acts as the major cargo protein of the cytoplasm-to-vacuole targeting (Cvt) pathway. The precursor form of aminopeptidase 1 (prApe1) assembles into dodecamers and the propeptide mediates the aggregation of dodecamers into higher multimers. The multimers are then recognized via the propeptide by their receptor ATG19, and ATG19 further interacts with ATG11, which tethers the APE1-ATG19 complex to the pre-autophagosomal structure (PAS). The cargo-receptor complex (also Cvt complex) is selectively enwrapped by a double-membrane structure termed the Cvt vesicle under vegetative growth conditions and by a similar but larger double-membrane structure termed the autophagosome under nitrogen starvation conditions. The Cvt vesicle or the autophagosome fuses with the vacuolar membrane and release its content in the vacuolar lumen. In the vacuole, prApe1 is processed into mature aminopeptidase 1 (mApe1). In Saccharomyces cerevisiae (strain ATCC 204508 / S288c) (Baker's yeast), this protein is Vacuolar aminopeptidase 1.